The chain runs to 46 residues: Protein PsbN (46 aa).

A helical membrane pass occupies residues 7-27; it reads ALSVAIGVLAVLFGLTGFGVY.

This sequence belongs to the PsbN family.

The protein resides in the cellular thylakoid membrane. In terms of biological role, may play a role in photosystem I and II biogenesis. The chain is Protein PsbN from Synechococcus sp. (strain CC9605).